The chain runs to 203 residues: Small ribosomal subunit protein uS4 (203 aa).

An S4 RNA-binding domain is found at 93–156 (RRLDNVVYRL…LKVPAILEAV (64 aa)).

The protein belongs to the universal ribosomal protein uS4 family. As to quaternary structure, part of the 30S ribosomal subunit. Contacts protein S5. The interaction surface between S4 and S5 is involved in control of translational fidelity.

One of the primary rRNA binding proteins, it binds directly to 16S rRNA where it nucleates assembly of the body of the 30S subunit. In terms of biological role, with S5 and S12 plays an important role in translational accuracy. This Streptococcus pneumoniae serotype 2 (strain D39 / NCTC 7466) protein is Small ribosomal subunit protein uS4.